The chain runs to 298 residues: Acetylglutamate kinase (298 aa).

Residues 69–70, Arg91, and Asn196 contribute to the substrate site; that span reads GG.

This sequence belongs to the acetylglutamate kinase family. ArgB subfamily.

It is found in the cytoplasm. It catalyses the reaction N-acetyl-L-glutamate + ATP = N-acetyl-L-glutamyl 5-phosphate + ADP. It functions in the pathway amino-acid biosynthesis; L-arginine biosynthesis; N(2)-acetyl-L-ornithine from L-glutamate: step 2/4. Its function is as follows. Catalyzes the ATP-dependent phosphorylation of N-acetyl-L-glutamate. This chain is Acetylglutamate kinase, found in Rhodopseudomonas palustris (strain ATCC BAA-98 / CGA009).